The following is a 318-amino-acid chain: Ribonuclease Z (318 aa).

Histidine 62, histidine 64, aspartate 66, histidine 67, histidine 144, aspartate 215, and histidine 273 together coordinate Zn(2+). Catalysis depends on aspartate 66, which acts as the Proton acceptor.

It belongs to the RNase Z family. In terms of assembly, homodimer. The cofactor is Zn(2+).

It carries out the reaction Endonucleolytic cleavage of RNA, removing extra 3' nucleotides from tRNA precursor, generating 3' termini of tRNAs. A 3'-hydroxy group is left at the tRNA terminus and a 5'-phosphoryl group is left at the trailer molecule.. Functionally, zinc phosphodiesterase, which displays some tRNA 3'-processing endonuclease activity. Probably involved in tRNA maturation, by removing a 3'-trailer from precursor tRNA. This is Ribonuclease Z from Prochlorococcus marinus (strain MIT 9313).